A 396-amino-acid polypeptide reads, in one-letter code: Gap junction gamma-1 protein (396 aa).

Residues 1–22 are Cytoplasmic-facing; it reads MSWSFLTRLLEEIHNHSTFVGK. Residues 23–45 form a helical membrane-spanning segment; that stretch reads IWLTVLIVFRIVLTAVGGESIYY. Topologically, residues 46–75 are extracellular; the sequence is DEQSKFVCNTEQPGCENVCYDAFAPLSHVR. A helical membrane pass occupies residues 76–95; sequence FWVFQIILVATPSVMYLGYA. The Cytoplasmic portion of the chain corresponds to 96 to 175; it reads IHKIAKMEHG…RRIREDGLMK (80 aa). The interval 145 to 165 is disordered; it reads ELESEKENKEQNQSKPKHDGR. A compositionally biased stretch (basic and acidic residues) spans 147 to 156; that stretch reads ESEKENKEQN. The chain crosses the membrane as a helical span at residues 176 to 198; the sequence is IYVLQLLARTMFEVGFLIGQYFL. Residues 199 to 228 lie on the Extracellular side of the membrane; it reads YGFQVHPFYVCSRVPCPHKIDCFISRPTEK. Residues 229–248 form a helical membrane-spanning segment; that stretch reads TIFLLIMYGVTGLCLLLNIW. Residues 249 to 396 lie on the Cytoplasmic side of the membrane; that stretch reads EMLHLGFGTI…SGDGKTSVWI (148 aa). Residues 357-396 form a disordered region; that stretch reads NHQNNPHGPREKKAKVGSKAGSNKSSASSKSGDGKTSVWI. Residues 373 to 396 are compositionally biased toward low complexity; sequence GSKAGSNKSSASSKSGDGKTSVWI.

The protein belongs to the connexin family. Gamma-type subfamily. As to quaternary structure, a connexon is composed of a hexamer of connexins. Interacts with CNST.

The protein resides in the cell membrane. The protein localises to the cell junction. Its subcellular location is the gap junction. Its function is as follows. One gap junction consists of a cluster of closely packed pairs of transmembrane channels, the connexons, through which materials of low MW diffuse from one cell to a neighboring cell. The sequence is that of Gap junction gamma-1 protein (GJC1) from Sus scrofa (Pig).